Consider the following 382-residue polypeptide: Galactokinase (382 aa).

A substrate-binding site is contributed by 34 to 37; it reads EHTD. An ATP-binding site is contributed by 124-130; sequence GAGLSSS. The Mg(2+) site is built by S130 and E162. The active-site Proton acceptor is D174. Substrate is bound at residue Y223.

This sequence belongs to the GHMP kinase family. GalK subfamily.

It localises to the cytoplasm. It carries out the reaction alpha-D-galactose + ATP = alpha-D-galactose 1-phosphate + ADP + H(+). It functions in the pathway carbohydrate metabolism; galactose metabolism. Catalyzes the transfer of the gamma-phosphate of ATP to D-galactose to form alpha-D-galactose-1-phosphate (Gal-1-P). In Salmonella paratyphi C (strain RKS4594), this protein is Galactokinase.